The sequence spans 775 residues: Glutamine--tRNA ligase (775 aa).

Alanine 2 carries the N-acetylalanine modification. Phosphoserine is present on serine 70. ATP-binding positions include 271–273 (EPN) and 277–283 (HIGHAKA). An L-glutamine-binding site is contributed by aspartate 303. Lysine 309 is modified (N6-acetyllysine). Tyrosine 438 contacts L-glutamine. ATP contacts are provided by residues threonine 457, 486-487 (RL), and 494-496 (VSK). A Phosphoserine modification is found at serine 495.

This sequence belongs to the class-I aminoacyl-tRNA synthetase family. In terms of assembly, monomer. Part of a multisubunit complex that groups tRNA ligases for Arg (RARS1), Asp (DARS1), Gln (QARS1), Ile (IARS1), Leu (LARS1), Lys (KARS1), Met (MARS1) the bifunctional ligase for Glu and Pro (EPRS1) and the auxiliary subunits AIMP1/p43, AIMP2/p38 and EEF1E1/p18. Interacts with RARS1. Part of a complex composed of RARS1, QARS1 and AIMP1. In terms of tissue distribution, detected in dorsal root ganglia (at protein level). Detected in dorsal root ganglia.

Its subcellular location is the cytoplasm. It localises to the cytosol. It carries out the reaction tRNA(Gln) + L-glutamine + ATP = L-glutaminyl-tRNA(Gln) + AMP + diphosphate. In terms of biological role, glutamine--tRNA ligase. Plays a critical role in brain development. The sequence is that of Glutamine--tRNA ligase (Qars1) from Rattus norvegicus (Rat).